The chain runs to 351 residues: 3-dehydroquinate synthase (351 aa).

NAD(+) is bound by residues 126–127 (TT), K138, and K147. Residues E180, H244, and H260 each coordinate Zn(2+).

Belongs to the sugar phosphate cyclases superfamily. Dehydroquinate synthase family. Requires Co(2+) as cofactor. Zn(2+) is required as a cofactor. NAD(+) serves as cofactor.

The protein resides in the cytoplasm. The enzyme catalyses 7-phospho-2-dehydro-3-deoxy-D-arabino-heptonate = 3-dehydroquinate + phosphate. Its pathway is metabolic intermediate biosynthesis; chorismate biosynthesis; chorismate from D-erythrose 4-phosphate and phosphoenolpyruvate: step 2/7. In terms of biological role, catalyzes the conversion of 3-deoxy-D-arabino-heptulosonate 7-phosphate (DAHP) to dehydroquinate (DHQ). This chain is 3-dehydroquinate synthase, found in Exiguobacterium sp. (strain ATCC BAA-1283 / AT1b).